Reading from the N-terminus, the 446-residue chain is Na(+)-translocating NADH-quinone reductase subunit A (446 aa).

It belongs to the NqrA family. As to quaternary structure, composed of six subunits; NqrA, NqrB, NqrC, NqrD, NqrE and NqrF.

The enzyme catalyses a ubiquinone + n Na(+)(in) + NADH + H(+) = a ubiquinol + n Na(+)(out) + NAD(+). NQR complex catalyzes the reduction of ubiquinone-1 to ubiquinol by two successive reactions, coupled with the transport of Na(+) ions from the cytoplasm to the periplasm. NqrA to NqrE are probably involved in the second step, the conversion of ubisemiquinone to ubiquinol. The protein is Na(+)-translocating NADH-quinone reductase subunit A of Vibrio atlanticus (strain LGP32) (Vibrio splendidus (strain Mel32)).